The primary structure comprises 435 residues: MKVIVLGGGVLGVSTAWYLAKAGCQVTVLERQDGVALETSFGNAGQISPGYSAPWAAPGIPLKGLKWMFQRHAPLAITPDGSLYQLQWIAKMLANCNEKAYAVNKGRMMRLAEYSRDKIKELRAETGLQYEGRQGGTLQLLRSQAQVEGMAKDIAVLRECGVDFNVLDPDGCARVEPALAAVKHKLAGGLQLPNDETGDCNLFTSRLAELARDKGVEFRFGVTVDGIENDGKRITGVRIGDELLRADHYVVAMGSYSRDMVKELGIDIPVYPVKGYSLTVPITNPDGAPTSTILDETYKVAITRFDNRIRVGGMAELSGYNLELNPRRRETLEMVVGDLYPNGGDIKAASFWTGLRPMTPDGTPIIGGTRFANLSLNTGHGTLGWTMCAGSGKVLADIITGAKPEISVDGLSMQRYAKQGETLVVPVIRPAVQGA.

3-17 (VIVLGGGVLGVSTAW) contributes to the FAD binding site.

Belongs to the DadA oxidoreductase family. Requires FAD as cofactor.

The catalysed reaction is a D-alpha-amino acid + A + H2O = a 2-oxocarboxylate + AH2 + NH4(+). Its pathway is amino-acid degradation; D-alanine degradation; NH(3) and pyruvate from D-alanine: step 1/1. Oxidative deamination of D-amino acids. The protein is D-amino acid dehydrogenase of Chromobacterium violaceum (strain ATCC 12472 / DSM 30191 / JCM 1249 / CCUG 213 / NBRC 12614 / NCIMB 9131 / NCTC 9757 / MK).